Here is a 78-residue protein sequence, read N- to C-terminus: Large ribosomal subunit protein bL28 (78 aa).

Positions 1–21 (MSRVCQVTGKKPMVGNNRSHA) are disordered.

Belongs to the bacterial ribosomal protein bL28 family.

This chain is Large ribosomal subunit protein bL28, found in Shewanella loihica (strain ATCC BAA-1088 / PV-4).